The following is a 318-amino-acid chain: NADH-ubiquinone oxidoreductase chain 1 (318 aa).

A run of 8 helical transmembrane segments spans residues 3–23, 70–90, 100–120, 146–166, 171–191, 231–251, 254–273, and 294–314; these read FINI…LTLV, LFII…IPLP, LGML…LWSG, MAII…QMLI, HIWL…STLA, IILM…HINY, LYST…FLWI, and LPLT…LAGI.

This sequence belongs to the complex I subunit 1 family. Core subunit of respiratory chain NADH dehydrogenase (Complex I) which is composed of 45 different subunits.

It localises to the mitochondrion inner membrane. It catalyses the reaction a ubiquinone + NADH + 5 H(+)(in) = a ubiquinol + NAD(+) + 4 H(+)(out). Core subunit of the mitochondrial membrane respiratory chain NADH dehydrogenase (Complex I) which catalyzes electron transfer from NADH through the respiratory chain, using ubiquinone as an electron acceptor. Essential for the catalytic activity and assembly of complex I. The polypeptide is NADH-ubiquinone oxidoreductase chain 1 (Rattus norvegicus (Rat)).